The following is a 308-amino-acid chain: Homoserine kinase (308 aa).

94–104 is a binding site for ATP; that stretch reads PLARGLGSSAT.

This sequence belongs to the GHMP kinase family. Homoserine kinase subfamily.

Its subcellular location is the cytoplasm. It catalyses the reaction L-homoserine + ATP = O-phospho-L-homoserine + ADP + H(+). Its pathway is amino-acid biosynthesis; L-threonine biosynthesis; L-threonine from L-aspartate: step 4/5. Its function is as follows. Catalyzes the ATP-dependent phosphorylation of L-homoserine to L-homoserine phosphate. The sequence is that of Homoserine kinase from Crocosphaera subtropica (strain ATCC 51142 / BH68) (Cyanothece sp. (strain ATCC 51142)).